We begin with the raw amino-acid sequence, 259 residues long: Tryptophan synthase alpha chain (259 aa).

Catalysis depends on proton acceptor residues Glu-52 and Asp-63.

This sequence belongs to the TrpA family. As to quaternary structure, tetramer of two alpha and two beta chains.

The enzyme catalyses (1S,2R)-1-C-(indol-3-yl)glycerol 3-phosphate + L-serine = D-glyceraldehyde 3-phosphate + L-tryptophan + H2O. Its pathway is amino-acid biosynthesis; L-tryptophan biosynthesis; L-tryptophan from chorismate: step 5/5. In terms of biological role, the alpha subunit is responsible for the aldol cleavage of indoleglycerol phosphate to indole and glyceraldehyde 3-phosphate. The sequence is that of Tryptophan synthase alpha chain from Streptococcus sanguinis (strain SK36).